Here is a 147-residue protein sequence, read N- to C-terminus: D-aminoacyl-tRNA deacylase (147 aa).

Positions 137-138 (GP) match the Gly-cisPro motif, important for rejection of L-amino acids motif.

The protein belongs to the DTD family. As to quaternary structure, homodimer.

The protein localises to the cytoplasm. The enzyme catalyses glycyl-tRNA(Ala) + H2O = tRNA(Ala) + glycine + H(+). It catalyses the reaction a D-aminoacyl-tRNA + H2O = a tRNA + a D-alpha-amino acid + H(+). In terms of biological role, an aminoacyl-tRNA editing enzyme that deacylates mischarged D-aminoacyl-tRNAs. Also deacylates mischarged glycyl-tRNA(Ala), protecting cells against glycine mischarging by AlaRS. Acts via tRNA-based rather than protein-based catalysis; rejects L-amino acids rather than detecting D-amino acids in the active site. By recycling D-aminoacyl-tRNA to D-amino acids and free tRNA molecules, this enzyme counteracts the toxicity associated with the formation of D-aminoacyl-tRNA entities in vivo and helps enforce protein L-homochirality. This Bacillus pumilus (strain SAFR-032) protein is D-aminoacyl-tRNA deacylase.